Here is a 137-residue protein sequence, read N- to C-terminus: Actin-depolymerizing factor 12 (137 aa).

Ser-6 is modified (phosphoserine). One can recognise an ADF-H domain in the interval 7-137; that stretch reads GMAVEDECKL…SLDIIKSRAL (131 aa).

This sequence belongs to the actin-binding proteins ADF family. In terms of tissue distribution, specifically expressed in pollen.

It is found in the cytoplasm. Its subcellular location is the cytoskeleton. Its function is as follows. Actin-depolymerizing protein. Severs actin filaments (F-actin) and binds to actin monomers. The sequence is that of Actin-depolymerizing factor 12 from Arabidopsis thaliana (Mouse-ear cress).